The sequence spans 263 residues: Endonuclease 8 (263 aa).

The active-site Schiff-base intermediate with DNA is proline 2. Residue glutamate 3 is the Proton donor of the active site. Lysine 53 acts as the Proton donor; for beta-elimination activity in catalysis. Glutamine 70, arginine 125, and asparagine 169 together coordinate DNA. The segment at 229 to 263 (KVFHRDGEPCERCGSIIEKTTLSSRPFYWCPGCQH) adopts an FPG-type zinc-finger fold. Arginine 253 serves as the catalytic Proton donor; for delta-elimination activity.

The protein belongs to the FPG family. It depends on Zn(2+) as a cofactor.

The enzyme catalyses 2'-deoxyribonucleotide-(2'-deoxyribose 5'-phosphate)-2'-deoxyribonucleotide-DNA = a 3'-end 2'-deoxyribonucleotide-(2,3-dehydro-2,3-deoxyribose 5'-phosphate)-DNA + a 5'-end 5'-phospho-2'-deoxyribonucleoside-DNA + H(+). Functionally, involved in base excision repair of DNA damaged by oxidation or by mutagenic agents. Acts as a DNA glycosylase that recognizes and removes damaged bases. Has a preference for oxidized pyrimidines, such as thymine glycol, 5,6-dihydrouracil and 5,6-dihydrothymine. Has AP (apurinic/apyrimidinic) lyase activity and introduces nicks in the DNA strand. Cleaves the DNA backbone by beta-delta elimination to generate a single-strand break at the site of the removed base with both 3'- and 5'-phosphates. This chain is Endonuclease 8, found in Escherichia coli O17:K52:H18 (strain UMN026 / ExPEC).